A 207-amino-acid chain; its full sequence is MPKVALYNQTGSQVGEIDLADSVFGIEPNSAVLYDAIVMQQASQRQGTHDVKNRSEVRGGGRKPWRQKGTGRARQGSIRSPQWKGGGVVFGPTPRKYGYKLNRKVRRLALKSALSTKVQNNELLVLEALNFAAPKTKEMTAVLSSLKVDRKVLIVTSEYDQNVALASRNIPGTKIVDAAGINVLDLVAHDKVIVTREAVAKVEEVLA.

A disordered region spans residues 44–78 (QRQGTHDVKNRSEVRGGGRKPWRQKGTGRARQGSI). Residues 47-59 (GTHDVKNRSEVRG) show a composition bias toward basic and acidic residues. A compositionally biased stretch (basic residues) spans 60-71 (GGRKPWRQKGTG).

It belongs to the universal ribosomal protein uL4 family. Part of the 50S ribosomal subunit.

In terms of biological role, one of the primary rRNA binding proteins, this protein initially binds near the 5'-end of the 23S rRNA. It is important during the early stages of 50S assembly. It makes multiple contacts with different domains of the 23S rRNA in the assembled 50S subunit and ribosome. Its function is as follows. Forms part of the polypeptide exit tunnel. This Brevibacillus brevis (strain 47 / JCM 6285 / NBRC 100599) protein is Large ribosomal subunit protein uL4.